The sequence spans 335 residues: MGCLLFLLLWALLQAWGSAEVPQRLFPLRCLQISSFANSSWTRTDGLAWLGELQTHSWSNDSDTVRSLKPWSQGTFSDQQWETLQHIFRVYRSSFTRDVKEFAKMLRLSYPLELQVSAGCEVHPGNASNNFFHVAFQGKDILSFQGTSWEPTQEAPLWVNLAIQVLNQDKWTRETVQWLLNGTCPQFVSGLLESGKSELKKQVKPKAWLSRGPSPGPGRLLLVCHVSGFYPKPVWVKWMRGEQEQQGTQPGDILPNADETWYLRATLDVVAGEAAGLSCRVKHSSLEGQDIVLYWGGSYTSMGLIALAVLACLLFLLIVGFTSRFKRQTSYQGVL.

A signal peptide spans 1-19 (MGCLLFLLLWALLQAWGSA). The Extracellular portion of the chain corresponds to 20 to 301 (EVPQRLFPLR…VLYWGGSYTS (282 aa)). N38 and N60 each carry an N-linked (GlcNAc...) asparagine glycan. D98 is a binding site for a D-galactosylceramide. 2 disulfide bridges follow: C120/C184 and C224/C279. An N-linked (GlcNAc...) asparagine glycan is attached at N126. 169–172 (DKWT) lines the a D-galactosylceramide pocket. N-linked (GlcNAc...) asparagine glycosylation occurs at N181. Residues 185-292 (PQFVSGLLES…HSSLEGQDIV (108 aa)) enclose the Ig-like domain. Residues 302–322 (MGLIALAVLACLLFLLIVGFT) traverse the membrane as a helical segment. Residues 323-335 (SRFKRQTSYQGVL) lie on the Cytoplasmic side of the membrane. An Internalization signal motif is present at residues 331–334 (YQGV).

As to quaternary structure, heterodimer with B2M (beta-2-microglobulin). Interacts with MHC II. In terms of tissue distribution, expressed on cortical thymocytes, on certain T-cell leukemias, and in various other tissues.

It localises to the cell membrane. The protein localises to the basolateral cell membrane. It is found in the endosome membrane. The protein resides in the lysosome membrane. Its subcellular location is the endoplasmic reticulum membrane. Antigen-presenting protein that binds self and non-self glycolipids and presents them to T-cell receptors on natural killer T-cells. This Homo sapiens (Human) protein is Antigen-presenting glycoprotein CD1d (CD1D).